The primary structure comprises 525 residues: Neutrophil cytosol factor 2 (525 aa).

3 TPR repeats span residues 37-70 (SRIC…DKHS), 71-104 (AVAY…LRGN), and 121-154 (CEVL…KSEP). Residue Thr233 is modified to Phosphothreonine. The region spanning 240 to 299 (LEGEAHRVLFGFVPETPEELQVMPGNIVFVLKKGSDNWATVMFNGQKGLVPCNYLEPVEL) is the SH3 1 domain. The interval 304 to 343 (QSQPQEDTSPESDIPPPPNSSPPGRLQLSPGHKQKEPKEL) is disordered. Ser324 and Ser398 each carry phosphoserine. One can recognise a PB1 domain in the interval 350 to 428 (PYMLKVHYKY…YCLTLWCEHT (79 aa)). Residues 437–457 (EPIQRENSDASKQTTEPQPKE) form a disordered region. The SH3 2 domain maps to 456-515 (KEGTQVVAIFSYEAAQPEDLEFVEGDVILVLSHVNEEWLEGECKGKVGIFPKAFVEGCAA).

This sequence belongs to the NCF2/NOXA1 family. Component of the phagocyte NADPH oxidase complex composed of an obligatory core heterodimer formed by the membrane proteins CYBA and CYBB and the cytosolic regulatory subunits NCF1/p47-phox, NCF2/p67-phox, NCF4/p40-phox and the small GTPase RAC1 or RAC2. Part of a cytosolic complex composed at least by NCF1, NCF2 and NCF4. Interacts with NCF4. Interacts (via the C-terminal SH3 domain) with NCF1 (via C-terminus). Interacts with SYTL1 and RAC1. May interact with NOXO1. Interacts with S100A8 and calprotectin (S100A8/9). Interacts with GBP7 (via GB1/RHD3-type G domain). Interacts with CYBB; the interaction is enhanced in the presence of GBP7.

The protein resides in the cytoplasm. In terms of biological role, NCF2, NCF1, and a membrane bound cytochrome b558 are required for activation of the latent NADPH oxidase (necessary for superoxide production). Subunit of the phagocyte NADPH oxidase complex that mediates the transfer of electrons from cytosolic NADPH to O2 to produce the superoxide anion (O2(-)). In the activated complex, electrons are first transferred from NADPH to flavin adenine dinucleotide (FAD) and subsequently transferred via two heme molecules to molecular oxygen, producing superoxide through an outer-sphere reaction. Activation of the NADPH oxidase complex is initiated by the assembly of cytosolic subunits of the NADPH oxidase complex with the core NADPH oxidase complex to form a complex at the plasma membrane or phagosomal membrane. This activation process is initiated by phosphorylation dependent binding of the cytosolic NCF1/p47-phox subunit to the C-terminus of CYBA/p22-phox. The protein is Neutrophil cytosol factor 2 of Mus musculus (Mouse).